A 370-amino-acid polypeptide reads, in one-letter code: Aminomethyltransferase (370 aa).

This sequence belongs to the GcvT family. As to quaternary structure, the glycine cleavage system is composed of four proteins: P, T, L and H.

It carries out the reaction N(6)-[(R)-S(8)-aminomethyldihydrolipoyl]-L-lysyl-[protein] + (6S)-5,6,7,8-tetrahydrofolate = N(6)-[(R)-dihydrolipoyl]-L-lysyl-[protein] + (6R)-5,10-methylene-5,6,7,8-tetrahydrofolate + NH4(+). In terms of biological role, the glycine cleavage system catalyzes the degradation of glycine. This chain is Aminomethyltransferase, found in Prochlorococcus marinus (strain AS9601).